Reading from the N-terminus, the 122-residue chain is Large ribosomal subunit protein uL14 (122 aa).

It belongs to the universal ribosomal protein uL14 family. As to quaternary structure, part of the 50S ribosomal subunit. Forms a cluster with proteins L3 and L19. In the 70S ribosome, L14 and L19 interact and together make contacts with the 16S rRNA in bridges B5 and B8.

Binds to 23S rRNA. Forms part of two intersubunit bridges in the 70S ribosome. In Nostoc punctiforme (strain ATCC 29133 / PCC 73102), this protein is Large ribosomal subunit protein uL14.